Reading from the N-terminus, the 260-residue chain is MAIDDIFIQAFRTHQQKGDLFHPLGHEDHEVFQSSTIGALMEGVYDGDTTYGELARHGDFGLGTFNALDGEMIALGGRFFQIKSDGKAYPVPPTAKTPFAVVTLFDPTVQVVWPDPIDWKQFQAAVDKAVPSKNVFYAIRVRACFDHIRVRTVPRQRKPYPPLVEVARRQPEFEYGHLEGTLVGFRFPDYTQGVNVAGYHVHFLDKAETLGGHVLDFSMRNAVVDIDVTSQFRMEVPECGAFLDADLARNQDEAIHEAEN.

The protein belongs to the alpha-acetolactate decarboxylase family.

The enzyme catalyses (2S)-2-acetolactate + H(+) = (R)-acetoin + CO2. It participates in polyol metabolism; (R,R)-butane-2,3-diol biosynthesis; (R,R)-butane-2,3-diol from pyruvate: step 2/3. Functionally, converts acetolactate into acetoin. In Methylococcus capsulatus (strain ATCC 33009 / NCIMB 11132 / Bath), this protein is Alpha-acetolactate decarboxylase (budA).